A 154-amino-acid chain; its full sequence is Urease accessory protein UreE (154 aa).

Residues Pro-134–Asp-154 form a disordered region. The span at Gly-143–Asp-154 shows a compositional bias: basic residues.

The protein belongs to the UreE family.

The protein localises to the cytoplasm. Functionally, involved in urease metallocenter assembly. Binds nickel. Probably functions as a nickel donor during metallocenter assembly. This Alteromonas mediterranea (strain DSM 17117 / CIP 110805 / LMG 28347 / Deep ecotype) protein is Urease accessory protein UreE.